Consider the following 320-residue polypeptide: MTETTSKRTVLVTGGSGLVGKGIEKYVKETDKSNDVWVFMRSSDCDLKSRESTRSYFEKIKPTHVIHLAARVGGLFSNMKYKVEFFRENIDINDNVLACCKEFNVVKCVSCLSTCIFPDKTTYPIDETMIHNGPPHPSNEGYAYAKRMIDVLNRAYNEEYGCKFTSVIPTNIYGPHDNYHLTDGHVIPGLIHKTYLAMKNNQDLTIMGTGKPLRQFIYSYDLAKYFVWTLNNYEEMSPLILSVGEEDEISIADVARLITEAMEFKGKLIFDTSKADGQYKKTASNLKLKSLVPDLTFTPIQQAIKESCQWFIDNYETARK.

14 to 20 (GGSGLVG) contributes to the NADP(+) binding site. Residue Y142 is the Proton donor/acceptor of the active site. Residues K146, 169 to 172 (PTNI), and H185 each bind NADP(+). Substrate-binding residues include K193, R214, and D276.

The protein belongs to the NAD(P)-dependent epimerase/dehydratase family. Fucose synthase subfamily.

It catalyses the reaction GDP-beta-L-fucose + NADP(+) = GDP-4-dehydro-alpha-D-rhamnose + NADPH + H(+). It functions in the pathway nucleotide-sugar biosynthesis; GDP-L-fucose biosynthesis via de novo pathway; GDP-L-fucose from GDP-alpha-D-mannose: step 2/2. Its function is as follows. Catalyzes the two-step NADP-dependent conversion of GDP-4-dehydro-6-deoxy-D-mannose to GDP-fucose, involving an epimerase and a reductase reaction. The protein is GDP-L-fucose synthase (ger) of Dictyostelium discoideum (Social amoeba).